Consider the following 557-residue polypeptide: Formate--tetrahydrofolate ligase (557 aa).

65–72 (TPAGEGKT) provides a ligand contact to ATP.

The protein belongs to the formate--tetrahydrofolate ligase family.

The enzyme catalyses (6S)-5,6,7,8-tetrahydrofolate + formate + ATP = (6R)-10-formyltetrahydrofolate + ADP + phosphate. Its pathway is one-carbon metabolism; tetrahydrofolate interconversion. The sequence is that of Formate--tetrahydrofolate ligase from Methylorubrum extorquens (strain CM4 / NCIMB 13688) (Methylobacterium extorquens).